The sequence spans 205 residues: Octanoyltransferase (205 aa).

The 176-residue stretch at 30-205 (NSADELVWLL…ILKKEFYKIF (176 aa)) folds into the BPL/LPL catalytic domain. Substrate is bound by residues 68-75 (RGGKHTYH), 140-142 (AFG), and 153-155 (GIA). Catalysis depends on C171, which acts as the Acyl-thioester intermediate.

It belongs to the LipB family.

It is found in the cytoplasm. The catalysed reaction is octanoyl-[ACP] + L-lysyl-[protein] = N(6)-octanoyl-L-lysyl-[protein] + holo-[ACP] + H(+). It functions in the pathway protein modification; protein lipoylation via endogenous pathway; protein N(6)-(lipoyl)lysine from octanoyl-[acyl-carrier-protein]: step 1/2. Its function is as follows. Catalyzes the transfer of endogenously produced octanoic acid from octanoyl-acyl-carrier-protein onto the lipoyl domains of lipoate-dependent enzymes. Lipoyl-ACP can also act as a substrate although octanoyl-ACP is likely to be the physiological substrate. The sequence is that of Octanoyltransferase from Wolbachia pipientis wMel.